Here is a 541-residue protein sequence, read N- to C-terminus: Carboxypeptidase Y homolog A (541 aa).

A signal peptide spans 1–17 (MKTFTAALLVGTALAAV). A propeptide spanning residues 18–122 (PQQQPLQTQV…KLENYDLRVK (105 aa)) is cleaved from the precursor. 5 cysteine pairs are disulfide-bonded: Cys177/Cys416, Cys311/Cys325, Cys335/Cys358, Cys342/Cys351, and Cys380/Cys386. Asn208 carries N-linked (GlcNAc...) asparagine glycosylation. Ser264 is a catalytic residue. Residue Asp455 is part of the active site. Residues Asn485, Asn491, and Asn506 are each glycosylated (N-linked (GlcNAc...) asparagine). Residue His517 is part of the active site.

This sequence belongs to the peptidase S10 family.

It is found in the vacuole. The enzyme catalyses Release of a C-terminal amino acid with broad specificity.. In terms of biological role, vacuolar carboxypeptidase involved in degradation of small peptides. Digests preferentially peptides containing an aliphatic or hydrophobic residue in P1' position, as well as methionine, leucine or phenylalanine in P1 position of ester substrate. The sequence is that of Carboxypeptidase Y homolog A (cpyA) from Uncinocarpus reesii (strain UAMH 1704).